Consider the following 139-residue polypeptide: Acidic phospholipase A2 5 (139 aa).

The first 16 residues, 1–16 (MRTLWIVAVWLMGVEG), serve as a signal peptide directing secretion. 7 disulfides stabilise this stretch: cysteine 42-cysteine 131, cysteine 44-cysteine 60, cysteine 59-cysteine 111, cysteine 65-cysteine 139, cysteine 66-cysteine 104, cysteine 73-cysteine 97, and cysteine 91-cysteine 102. Residues tyrosine 43, glycine 45, and glycine 47 each contribute to the Ca(2+) site. Residue histidine 63 is part of the active site. Aspartate 64 lines the Ca(2+) pocket. Residue aspartate 105 is part of the active site.

The protein belongs to the phospholipase A2 family. Group II subfamily. D49 sub-subfamily. Requires Ca(2+) as cofactor. As to expression, expressed by the venom gland.

The protein localises to the secreted. It catalyses the reaction a 1,2-diacyl-sn-glycero-3-phosphocholine + H2O = a 1-acyl-sn-glycero-3-phosphocholine + a fatty acid + H(+). Its function is as follows. PLA2 catalyzes the calcium-dependent hydrolysis of the 2-acyl groups in 3-sn-phosphoglycerides. The protein is Acidic phospholipase A2 5 of Echis pyramidum leakeyi (Leakey's carpet viper).